The primary structure comprises 503 residues: Maturase K (503 aa).

It belongs to the intron maturase 2 family. MatK subfamily.

The protein resides in the plastid. The protein localises to the chloroplast. In terms of biological role, usually encoded in the trnK tRNA gene intron. Probably assists in splicing its own and other chloroplast group II introns. This Aethionema cordifolium (Lebanon stonecress) protein is Maturase K.